The primary structure comprises 104 residues: Small ribosomal subunit protein uS10 (104 aa).

It belongs to the universal ribosomal protein uS10 family. In terms of assembly, part of the 30S ribosomal subunit.

Its function is as follows. Involved in the binding of tRNA to the ribosomes. The polypeptide is Small ribosomal subunit protein uS10 (Xanthomonas oryzae pv. oryzae (strain MAFF 311018)).